The sequence spans 110 residues: U-scoloptoxin(16)-Er7a (110 aa).

Residues 1 to 26 (MTSTRKLSVSCLIVFMVSSLIAVSSG) form the signal peptide.

This sequence belongs to the scoloptoxin-16 family. In terms of processing, contains 4 disulfide bonds. In terms of tissue distribution, expressed by the venom gland.

The protein localises to the secreted. The protein is U-scoloptoxin(16)-Er7a of Ethmostigmus rubripes (Giant centipede).